The following is a 369-amino-acid chain: uncharacterized protein (369 aa).

Positions 1-35 are disordered; the sequence is MQTNNPSYFFRSESALQDEKRKEEKSHNPNGNPRN. Basic and acidic residues predominate over residues 17-27; sequence QDEKRKEEKSH. 6 WD repeats span residues 83-127, 130-169, 174-213, 220-260, 263-301, and 304-341; these read GHSG…CVET, GHTDYVKCLLLLEEEGLLLSGSTDASLIVWDVSSQPSRLL, GHSRGIECITRQPNTDIFWTCGSESSIRCWHITKVGGSQL, GHQS…HEET, EHPDVCTDVLTLADGNIATACRDEEIRVWDTTTGNVKDI, and GHYESVTKILQWKSYLISSSLDQTIRVWDLEYSADNNE.

This is an uncharacterized protein from Schizosaccharomyces pombe (strain 972 / ATCC 24843) (Fission yeast).